Here is a 351-residue protein sequence, read N- to C-terminus: D-alanine--D-alanine ligase (351 aa).

The ATP-grasp domain maps to 146 to 340 (KEIMLYNNIK…YEDLCESIVL (195 aa)). Position 173 to 226 (173 to 226 (AFDYPMVVKPNSGGSSIGTRIVHDEAELAESLKDAYRFDDEIIVEEFITGREFS)) interacts with ATP. The Mg(2+) site is built by Asp295, Glu307, and Asn309.

Belongs to the D-alanine--D-alanine ligase family. Mg(2+) serves as cofactor. Requires Mn(2+) as cofactor.

Its subcellular location is the cytoplasm. It catalyses the reaction 2 D-alanine + ATP = D-alanyl-D-alanine + ADP + phosphate + H(+). The protein operates within cell wall biogenesis; peptidoglycan biosynthesis. Its function is as follows. Cell wall formation. The protein is D-alanine--D-alanine ligase of Pediococcus pentosaceus (strain ATCC 25745 / CCUG 21536 / LMG 10740 / 183-1w).